The following is a 1418-amino-acid chain: Sterol 3-beta-glucosyltransferase (1418 aa).

Basic and acidic residues predominate over residues methionine 1 to leucine 16. Disordered regions lie at residues methionine 1–glycine 59, alanine 83–threonine 188, and leucine 207–serine 233. Residues alanine 18–leucine 28 are compositionally biased toward polar residues. 2 stretches are compositionally biased toward basic and acidic residues: residues aspartate 35–glutamine 44 and serine 95–valine 105. Residues arginine 106–threonine 115 are compositionally biased toward polar residues. The segment covering serine 116–serine 126 has biased composition (low complexity). Composition is skewed to basic and acidic residues over residues serine 127–threonine 139 and threonine 147–glutamine 166. Positions alanine 209 to leucine 219 are enriched in polar residues. In terms of domain architecture, GRAM 1 spans glutamate 249–valine 288. Residues alanine 289–phenylalanine 387 enclose the PH domain. Positions isoleucine 462 to proline 651 are disordered. The span at arginine 486–leucine 497 shows a compositional bias: polar residues. Residues alanine 508–histidine 519 show a composition bias toward low complexity. A compositionally biased stretch (polar residues) spans serine 534–threonine 575. The span at glycine 578–alanine 598 shows a compositional bias: basic and acidic residues. Residues arginine 599–glutamine 612 are compositionally biased toward polar residues. Residues glutamate 615 to threonine 633 show a composition bias toward basic and acidic residues. A compositionally biased stretch (polar residues) spans glutamate 635–proline 651. Residues aspartate 733–lysine 799 enclose the GRAM 2 domain. UDP-alpha-D-glucose is bound by residues serine 920, arginine 921, aspartate 923, alanine 1223, histidine 1225, histidine 1238, glycine 1242, threonine 1243, aspartate 1262, and glutamine 1263. Residues serine 1339 to arginine 1418 are disordered. A compositionally biased stretch (low complexity) spans alanine 1341 to threonine 1355. The segment covering glutamine 1358–methionine 1379 has biased composition (acidic residues). Residues glutamate 1380–serine 1391 show a composition bias toward basic and acidic residues.

It belongs to the glycosyltransferase 28 family.

The protein localises to the cytoplasm. The protein resides in the preautophagosomal structure membrane. The enzyme catalyses a sterol + UDP-alpha-D-glucose = a sterol 3-beta-D-glucoside + UDP + H(+). It carries out the reaction ergosterol + UDP-alpha-D-glucose = ergosteryl 3-beta-D-glucoside + UDP + H(+). Its function is as follows. Sterol glycosyltransferase responsible for the glycosylation of ergosterol to form ergosterol-glucoside. This chain is Sterol 3-beta-glucosyltransferase, found in Neosartorya fischeri (strain ATCC 1020 / DSM 3700 / CBS 544.65 / FGSC A1164 / JCM 1740 / NRRL 181 / WB 181) (Aspergillus fischerianus).